Here is a 340-residue protein sequence, read N- to C-terminus: Adenine deaminase (340 aa).

Positions 17, 19, and 197 each coordinate Zn(2+). Residue E200 is the Proton donor of the active site. D278 contacts Zn(2+). D279 serves as a coordination point for substrate.

Belongs to the metallo-dependent hydrolases superfamily. Adenosine and AMP deaminases family. Adenine deaminase type 2 subfamily. It depends on Zn(2+) as a cofactor.

The enzyme catalyses adenine + H2O + H(+) = hypoxanthine + NH4(+). Its function is as follows. Catalyzes the hydrolytic deamination of adenine to hypoxanthine. Plays an important role in the purine salvage pathway and in nitrogen catabolism. The protein is Adenine deaminase of Streptomyces coelicolor (strain ATCC BAA-471 / A3(2) / M145).